Here is a 322-residue protein sequence, read N- to C-terminus: 2-methylene-furan-3-one reductase (322 aa).

NADP(+)-binding positions include lysine 59, glycine 174 to valine 175, serine 197 to lysine 200, tyrosine 215, isoleucine 253, phenylalanine 264 to leucine 266, and arginine 311 to alanine 312. Lysine 59 provides a ligand contact to substrate.

This sequence belongs to the zinc-containing alcohol dehydrogenase family. Quinone oxidoreductase subfamily. As to quaternary structure, monomer.

It catalyses the reaction 4-hydroxy-2,5-dimethyl-furan-3(2H)-one + NADP(+) = 4-hydroxy-5-methyl-2-methylenefuran-3(2H)-one + NADPH + H(+). Its function is as follows. Enone oxidoreductase involved in the biosynthesis of 4-hydroxy-2,5-dimethyl-3(2H)-furanone (HDMF or furaneol), the key flavor compound in strawberries. The chain is 2-methylene-furan-3-one reductase (EO) from Fragaria vesca (Woodland strawberry).